An 82-amino-acid chain; its full sequence is Small ribosomal subunit protein bS16 (82 aa).

The protein belongs to the bacterial ribosomal protein bS16 family.

The chain is Small ribosomal subunit protein bS16 from Glaesserella parasuis serovar 5 (strain SH0165) (Haemophilus parasuis).